The following is a 160-amino-acid chain: Serine-protein kinase RsbW (160 aa).

It belongs to the anti-sigma-factor family.

It catalyses the reaction L-seryl-[protein] + ATP = O-phospho-L-seryl-[protein] + ADP + H(+). It carries out the reaction L-threonyl-[protein] + ATP = O-phospho-L-threonyl-[protein] + ADP + H(+). Functionally, negative regulator of sigma-B activity. Phosphorylates and inactivates its specific antagonist protein, RsbV. Upon phosphorylation of RsbV, RsbW is released and binds to sigma-B, thereby blocking its ability to form an RNA polymerase holoenzyme (E-sigma-B). The polypeptide is Serine-protein kinase RsbW (Bacillus cereus (strain B4264)).